Consider the following 476-residue polypeptide: Amino acid permease 3 (476 aa).

At 1 to 33 (MVQNHQTVLAVDMPQTGGSKYLDDDGKNKRTGS) the chain is on the cytoplasmic side. A helical transmembrane segment spans residues 34-54 (VWTASAHIITAVIGSGVLSLA). Over 55-57 (WAT) the chain is Extracellular. A helical transmembrane segment spans residues 58 to 78 (AQLGWLAGPVVMLLFSAVTYF). The Cytoplasmic portion of the chain corresponds to 79–122 (TSSLLAACYRSGDPISGKRNYTYMDAVRSNLGGVKVTLCGIVQY). Residues 123–143 (LNIFGVAIGYTIASAISMMAI) traverse the membrane as a helical segment. Over 144–166 (KRSNCFHKSGGKDPCHMNSNPYM) the chain is Extracellular. Helical transmembrane passes span 167–187 (IAFG…QLWW) and 188–208 (LSIL…ALGI). Residues 209-277 (AQVVVNGKVK…EEKTMKKATL (69 aa)) lie on the Extracellular side of the membrane. Residues 278–298 (VSVSVTTMFYMLCGCMGYAAF) traverse the membrane as a helical segment. Topologically, residues 299-300 (GD) are cytoplasmic. Residues 301–321 (LSPGNLLTGFGFYNPYWLLDI) traverse the membrane as a helical segment. The Extracellular segment spans residues 322–324 (ANA). Residues 325 to 345 (AIVIHLIGAYQVYCQPLFAFI) form a helical membrane-spanning segment. Over 346–384 (EKQASIQFPDSEFIAKDIKIPIPGFKPLRLNVFRLIWRT) the chain is Cytoplasmic. A run of 2 helical transmembrane segments spans residues 385-405 (VFVI…DVVG) and 406-426 (LLGA…MYIA). Residues 427-441 (QKKIPRWSTRWVCLQ) are Cytoplasmic-facing. A helical transmembrane segment spans residues 442–462 (VFSLGCLVVSIAAAAGSIAGV). The Extracellular portion of the chain corresponds to 463 to 476 (LLDLKSYKPFRSEY).

This sequence belongs to the amino acid/polyamine transporter 2 family. Amino acid/auxin permease (AAAP) (TC 2.A.18.2) subfamily. Expressed in the root phloem. Detected in stamens, in cotyledons, and in major veins of mature leaves.

It localises to the cell membrane. The protein localises to the nucleus membrane. It is found in the endomembrane system. With respect to regulation, inhibited by carbonylcyanide m-chlorophenylhydrazone and 2,4-dinitrophenol. Its function is as follows. Amino acid-proton symporter. Stereospecific transporter with a broad specificity for GABA, tryptophan and both neutral and basic amino acids. High affinity transport of cationic amino acids. This is Amino acid permease 3 (AAP3) from Arabidopsis thaliana (Mouse-ear cress).